The sequence spans 264 residues: PDZ domain-containing protein 9 (264 aa).

Residues 22–109 (VHNLSKTQQT…GTVLQIKVYR (88 aa)) enclose the PDZ domain.

This Macaca fascicularis (Crab-eating macaque) protein is PDZ domain-containing protein 9 (PDZD9).